We begin with the raw amino-acid sequence, 2352 residues long: Highly reducing polyketide synthase ZEA2 (2352 aa).

The Ketosynthase family 3 (KS3) domain occupies 9–433 (PGPVAIVGLA…GTNGHVVLEA (425 aa)). Residues Cys-181, His-316, and His-356 each act as for beta-ketoacyl synthase activity in the active site. The tract at residues 544–875 (FVFTGQGAQW…LATSLFLQGV (332 aa)) is malonyl-CoA:ACP transacylase (MAT) domain. Ser-634 serves as the catalytic For malonyltransferase activity. Positions 923 to 1058 (RSIIGAPVPK…GLITIDYEGN (136 aa)) are N-terminal hotdog fold. The PKS/mFAS DH domain occupies 923–1242 (RSIIGAPVPK…TSELEMDGAA (320 aa)). Positions 925–1237 (IIGAPVPKMN…VIDFRTSELE (313 aa)) are dehydratase (DH) domain. The Proton acceptor; for dehydratase activity role is filled by His-955. A C-terminal hotdog fold region spans residues 1086 to 1242 (PATYAKDRFY…TSELEMDGAA (157 aa)). The Proton donor; for dehydratase activity role is filled by Asp-1152. Positions 1643–1955 (GLLDTLYFVD…QGKHRGKIVL (313 aa)) are enoylreductase (ER) domain. The catalytic ketoreductase (KRc) domain stretch occupies residues 1979–2159 (ATYLFVGGLG…VSVNLGIMRD (181 aa)). A Carrier domain is found at 2269 to 2346 (KATEIITNAL…SFAGKLASTS (78 aa)). Position 2306 is an O-(pantetheine 4'-phosphoryl)serine (Ser-2306).

The protein operates within mycotoxin biosynthesis. Its function is as follows. Highly reducing polyketide synthase; part of the gene cluster that mediates the biosynthesis of zearalenone (ZEA), a nonsteroid estrogen that is a contaminant of cereal grains and causes estrogenic disorders in humans and animals. The ZEA backbone is synthesized from a single acetyl-CoA molecule and eight malonyl-CoA molecules. The reducing polyketide synthase ZEA2 is proposed to synthesize a reduced hexaketide intermediate by using different combinations of its reductive domains during each round of condensation. The hexaketide thioester is then transacylated to the non-reducing polyketide synthase ZEA1 and is further condensed with three malonyl-CoAs without reductive tailoring to yield a mixed reduced/unreduced nonaketide. ZEA1 must be able to interact with ZEA2 to facilitate starter-unit acyltransfer and initiate polyketide biosynthesis. ZEA1 also mediates the required C2-C7 cyclization to form the resorcylate core and catalyzes the formation of the macrolactone. ZEB1 is then responsible for the chemical conversion of beta-zearalenonol (beta-ZOL) to ZEA in the biosynthetic pathway. This is Highly reducing polyketide synthase ZEA2 from Gibberella zeae (strain ATCC MYA-4620 / CBS 123657 / FGSC 9075 / NRRL 31084 / PH-1) (Wheat head blight fungus).